The primary structure comprises 959 residues: Bifunctional premutilin synthase (959 aa).

Residues 1 to 542 (MGLSEDLHAR…ALNVPIPRFD (542 aa)) are class II diterpene cyclase. Positions 309–312 (DADM) match the DXDD motif motif. Asp311 acts as the For class II diterpene cyclase activity in catalysis. Positions 543–959 (PASITTLPPI…TANGSNGIHH (417 aa)) are class I diterpene synthase. Asp649 (for class I diterpene synthase activity) is an active-site residue. Mg(2+) is bound by residues Asp649, Asp653, and Asn824. The DDXXD motif motif lies at 649 to 653 (DDYLD). Residues 931-959 (KGANGVKKTNGLTTNGTKATANGSNGIHH) form a disordered region. The span at 934–959 (NGVKKTNGLTTNGTKATANGSNGIHH) shows a compositional bias: low complexity.

This sequence belongs to the terpene synthase family. Mg(2+) is required as a cofactor.

Its pathway is secondary metabolite biosynthesis; terpenoid biosynthesis. Bifunctional premutilin synthase; part of the gene cluster that mediates the biosynthesis of pleuromutilin, a tricyclic diterpene showing antibacterial properties. The geranylgeranyl diphosphate (GGPP) synthase ple4 catalyzes the first step in pleuromutilin biosynthesis. GGPP is then substrate of the premutilin synthase (PS) ple3 to yield premutilin. Premutilin synthase is a bifunctional enzyme composed of the fusion of a class II diterpene cyclase (DTC) and a class I diterpene synthase (DTS), with the corresponding domains and active sites containing characteristic aspartate-rich motifs. GGPP is first converted to mutildienyl-diphosphate (MPP) at the class II DTC site. MPP is subsequently further cyclized at the class I DTS site, followed by a 1,5-hydride shift and addition of water prior to terminating deprotonation, to yield premutilin. The cytochrome P450 monooxygenases ple5 and ple6 hydroxylate premutilin at C-11 and C-3, respectively, producing 11-hydroxypremutilin and 3-hydroxypremutilin. The combination of the actions of both ple5 and ple6 leads to the production of 3,11-dihydroxypremutilin. The short chain dehydrogenase ple7 further converts 3,11-dihydroxypremutilin into mutilin. The acetyltransferase ple2 then acetylates mutilin to produce 14-O-acetylmutilin. Finally, the cytochrome P450 monooxygenase ple1 catalyzes hydroxylation on the alpha position of the acetyl side chain of 14-O-acetylmutilin to yield pleuromutilin. This Rhodocybe pseudopiperita (Clitopilus pseudopiperitus) protein is Bifunctional premutilin synthase.